A 368-amino-acid chain; its full sequence is Agmatine deiminase (368 aa).

The active-site Amidino-cysteine intermediate is the Cys-357.

It belongs to the agmatine deiminase family. As to quaternary structure, homodimer.

The catalysed reaction is agmatine + H2O = N-carbamoylputrescine + NH4(+). It functions in the pathway amine and polyamine biosynthesis; putrescine biosynthesis via agmatine pathway; N-carbamoylputrescine from agmatine: step 1/1. Functionally, mediates the hydrolysis of agmatine into N-carbamoylputrescine in the arginine decarboxylase (ADC) pathway of putrescine biosynthesis, a basic polyamine. This is Agmatine deiminase from Pseudomonas putida (strain ATCC 700007 / DSM 6899 / JCM 31910 / BCRC 17059 / LMG 24140 / F1).